Reading from the N-terminus, the 433-residue chain is Histidinol dehydrogenase (433 aa).

NAD(+) contacts are provided by Tyr-133, Gln-194, and Asn-217. Substrate-binding residues include Ser-240, Gln-262, and His-265. Zn(2+) is bound by residues Gln-262 and His-265. Residues Glu-330 and His-331 each act as proton acceptor in the active site. Substrate contacts are provided by His-331, Asp-364, Glu-418, and His-423. Asp-364 lines the Zn(2+) pocket. Residue His-423 coordinates Zn(2+).

Belongs to the histidinol dehydrogenase family. Zn(2+) serves as cofactor.

It catalyses the reaction L-histidinol + 2 NAD(+) + H2O = L-histidine + 2 NADH + 3 H(+). It participates in amino-acid biosynthesis; L-histidine biosynthesis; L-histidine from 5-phospho-alpha-D-ribose 1-diphosphate: step 9/9. In terms of biological role, catalyzes the sequential NAD-dependent oxidations of L-histidinol to L-histidinaldehyde and then to L-histidine. The chain is Histidinol dehydrogenase from Hydrogenovibrio crunogenus (strain DSM 25203 / XCL-2) (Thiomicrospira crunogena).